The primary structure comprises 209 residues: Small ribosomal subunit protein uS4 (209 aa).

Residues 23–46 are disordered; the sequence is SRNPLLKKPHPPGQHGMQRKKKSD. An S4 RNA-binding domain is found at 93–156; that stretch reads CRLDNMVYRM…RKLQSVQESL (64 aa).

It belongs to the universal ribosomal protein uS4 family. In terms of assembly, part of the 30S ribosomal subunit. Contacts protein S5. The interaction surface between S4 and S5 is involved in control of translational fidelity.

One of the primary rRNA binding proteins, it binds directly to 16S rRNA where it nucleates assembly of the body of the 30S subunit. In terms of biological role, with S5 and S12 plays an important role in translational accuracy. The protein is Small ribosomal subunit protein uS4 of Chlamydia felis (strain Fe/C-56) (Chlamydophila felis).